The sequence spans 255 residues: EEF1A lysine methyltransferase 4 (255 aa).

S-adenosyl-L-methionine is bound by residues tryptophan 26 and tyrosine 30. Residue tyrosine 39 is modified to Phosphotyrosine. Residues tryptophan 41, glycine 66, 88 to 89 (DY), 113 to 114 (DV), and lysine 130 contribute to the S-adenosyl-L-methionine site. The Required for methyltransferase activity motif lies at 129–134 (EKGTLD).

The protein belongs to the methyltransferase superfamily.

It catalyses the reaction L-lysyl-[protein] + S-adenosyl-L-methionine = N(6)-methyl-L-lysyl-[protein] + S-adenosyl-L-homocysteine + H(+). It carries out the reaction N(6)-methyl-L-lysyl-[protein] + S-adenosyl-L-methionine = N(6),N(6)-dimethyl-L-lysyl-[protein] + S-adenosyl-L-homocysteine + H(+). The catalysed reaction is N(6),N(6)-dimethyl-L-lysyl-[protein] + S-adenosyl-L-methionine = N(6),N(6),N(6)-trimethyl-L-lysyl-[protein] + S-adenosyl-L-homocysteine + H(+). In terms of biological role, protein-lysine methyltransferase that efficiently catalyzes three successive methylations on 'Lys-36' in eukaryotic translation elongation factor 1 alpha (EEF1A1 or EEF1A2). This chain is EEF1A lysine methyltransferase 4, found in Homo sapiens (Human).